A 441-amino-acid polypeptide reads, in one-letter code: Transcriptional regulatory protein ZraR (441 aa).

Residues 7–121 enclose the Response regulatory domain; sequence DILVVDDDVS…RLQETLEKAL (115 aa). Residue D56 is modified to 4-aspartylphosphate. The Sigma-54 factor interaction domain occupies 141-370; it reads MIGSSPAMQH…LENAIERAVV (230 aa). 4 residues coordinate ATP: G172, T173, R329, and R359. A DNA-binding region (H-T-H motif) is located at residues 421-440; sequence KTEAARQLGITRKTLLAKLS.

In terms of assembly, forms homohexamers in the crystal structure. However, the dimerization interface between DNA-binding domains observed in the crystal structure suggests that dodecamers, rather than hexamers, might be the functionally important oligomer. Phosphorylated by ZraS.

Its subcellular location is the cytoplasm. With respect to regulation, activity of the ZraS/ZraR two-component system is repressed by the zinc-bound form of ZraP, which probably interacts with the periplasmic region of ZraS. Functionally, part of the Zra signaling pathway, an envelope stress response (ESR) system composed of the periplasmic accessory protein ZraP, the histidine kinase ZraS and the transcriptional regulator ZraR. The ZraPSR system contributes to antibiotic resistance and is important for membrane integrity in the presence of membrane-targeting biocides. ZraR is a member of the two-component regulatory system ZraS/ZraR. When activated by ZraS, acts in conjunction with sigma-54 to regulate the expression of zraP in the presence of high Zn(2+) or Pb(2+) concentrations. Also positively autoregulates the expression of the zraSR operon. The protein is Transcriptional regulatory protein ZraR of Salmonella typhimurium (strain LT2 / SGSC1412 / ATCC 700720).